The primary structure comprises 191 residues: Prostaglandin-H2 D-isomerase (191 aa).

The first 28 residues, 1–28 (MATPNRLWMALLLLGVLGVLQTPAPAQA), serve as a signal peptide directing secretion. Asn51 is a glycosylation site (N-linked (GlcNAc...) asparagine). The active-site Nucleophile is the Cys65. N-linked (GlcNAc...) asparagine glycosylation is present at Asn78. A disulfide bridge links Cys89 with Cys186.

It belongs to the calycin superfamily. Lipocalin family. As to quaternary structure, monomer. As to expression, in the male reproductive system, expressed in the testis, epididymis and prostate, and secreted into the seminal fluid.

The protein resides in the rough endoplasmic reticulum. Its subcellular location is the nucleus membrane. It localises to the golgi apparatus. It is found in the cytoplasm. The protein localises to the perinuclear region. The protein resides in the secreted. It catalyses the reaction prostaglandin H2 = prostaglandin D2. Catalyzes the conversion of PGH2 to PGD2, a prostaglandin involved in smooth muscle contraction/relaxation and a potent inhibitor of platelet aggregation. Involved in a variety of CNS functions, such as sedation, NREM sleep and PGE2-induced allodynia, and may have an anti-apoptotic role in oligodendrocytes. Binds small non-substrate lipophilic molecules, including biliverdin, bilirubin, retinal, retinoic acid and thyroid hormone, and may act as a scavenger for harmful hydrophobic molecules and as a secretory retinoid and thyroid hormone transporter. Possibly involved in development and maintenance of the blood-brain, blood-retina, blood-aqueous humor and blood-testis barrier. It is likely to play important roles in both maturation and maintenance of the central nervous system and male reproductive system. Involved in PLA2G3-dependent maturation of mast cells. PLA2G3 is secreted by immature mast cells and acts on nearby fibroblasts upstream to PTDGS to synthesize PGD2, which in turn promotes mast cell maturation and degranulation via PTGDR. This Bos taurus (Bovine) protein is Prostaglandin-H2 D-isomerase (PTGDS).